Here is a 285-residue protein sequence, read N- to C-terminus: Hypersensitive-induced response protein 3 (285 aa).

Gly2 is lipidated: N-myristoyl glycine. Coiled coils occupy residues 113–139 (NLDD…MTAY) and 165–185 (NAAA…KIIQ).

Self-interacts and forms heteromers. Interacts with NB-LRR class of R proteins before R proteins (e.g. RPS2 or RPM1) are activated by the effectors.

The protein localises to the cell membrane. This chain is Hypersensitive-induced response protein 3 (HIR3), found in Arabidopsis thaliana (Mouse-ear cress).